We begin with the raw amino-acid sequence, 276 residues long: Octopine-binding periplasmic protein (276 aa).

A signal peptide spans 1-20 (MKLKTILCAALLLVAGQAAA). Cys57 and Cys64 are disulfide-bonded.

Belongs to the bacterial solute-binding protein 3 family.

The protein localises to the periplasm. Component of the octopine active transport system probably consisting of four subunits: Q, M, P and T. The chain is Octopine-binding periplasmic protein (occT) from Agrobacterium tumefaciens (strain Ach5).